A 363-amino-acid polypeptide reads, in one-letter code: G-protein coupled receptor 78 (363 aa).

Residues 1–7 (MGPGEAL) lie on the Extracellular side of the membrane. The helical transmembrane segment at 8–28 (LAGLLVMVLAVALLSNALVLL) threads the bilayer. The Cytoplasmic portion of the chain corresponds to 29 to 47 (CCAYSAELRTRASGVLLVN). A helical membrane pass occupies residues 48–68 (LSLGHLLLAALDMPFTLLGVM). Residues 69-80 (RGRTPSAPGACQ) are Extracellular-facing. Residues Cys79 and Cys156 are joined by a disulfide bond. A helical membrane pass occupies residues 81–101 (VIGFLDTFLASNAALSVAALS). Residues 102–122 (ADQWLAVGFPLRYAGRLRPRY) lie on the Cytoplasmic side of the membrane. Residues 123–143 (AGLLLGCAWGQSLAFSGAALG) form a helical membrane-spanning segment. At 144–168 (CSWLGYSSAFASCSLRLPPEPERPR) the chain is on the extracellular side. Residues 169-189 (FAAFTATLHAVGFVLPLAVLC) traverse the membrane as a helical segment. At 190–242 (LTSLQVHRVARRHCQRMDTVTMKALALLADLHPSVRQRCLIQQKRRRHRATRK) the chain is on the cytoplasmic side. Residues 243–263 (IGIAIATFLICFAPYVMTRLA) form a helical membrane-spanning segment. Topologically, residues 264-277 (ELVPFVTVNAQWGI) are extracellular. Residues 278–297 (LSKCLTYSKAVADPFTYSLL) traverse the membrane as a helical segment. The Cytoplasmic segment spans residues 298–363 (RRPFRQVLAG…ENDSCLQQTH (66 aa)). Positions 340-363 (TPRPASTHNGSVDTENDSCLQQTH) are disordered. Residues 343–363 (PASTHNGSVDTENDSCLQQTH) show a composition bias toward polar residues.

Belongs to the G-protein coupled receptor 1 family. In terms of tissue distribution, high level of expression in placenta. Expressed throughout the brain at low level. No expression detected in skeletal muscle, lung, heart, liver, pancreas, or kidney.

The protein resides in the cell membrane. In terms of biological role, orphan receptor. Displays a significant level of constitutive activity. Its effect is mediated by G(s)-alpha protein that stimulate adenylate cyclase, resulting in an elevation of intracellular cAMP. In Homo sapiens (Human), this protein is G-protein coupled receptor 78 (GPR78).